The primary structure comprises 508 residues: Pancreatic alpha-amylase 2a5 (508 aa).

A signal peptide spans 1 to 15; it reads MKFVLLLSLIGFCWA. At glutamine 16 the chain carries Pyrrolidone carboxylic acid. Cystine bridges form between cysteine 43-cysteine 101, cysteine 85-cysteine 130, and cysteine 156-cysteine 172. Ca(2+) contacts are provided by asparagine 115, arginine 170, and aspartate 179. Position 207 (arginine 207) interacts with chloride. Aspartate 209 functions as the Nucleophile in the catalytic mechanism. Histidine 213 contributes to the Ca(2+) binding site. The active-site Proton donor is glutamate 245. Chloride contacts are provided by asparagine 310 and arginine 349. Disulfide bonds link cysteine 390–cysteine 396 and cysteine 462–cysteine 474.

The protein belongs to the glycosyl hydrolase 13 family. Monomer. Ca(2+) is required as a cofactor. It depends on chloride as a cofactor.

It localises to the secreted. It is found in the extracellular space. It catalyses the reaction Endohydrolysis of (1-&gt;4)-alpha-D-glucosidic linkages in polysaccharides containing three or more (1-&gt;4)-alpha-linked D-glucose units.. The protein is Pancreatic alpha-amylase 2a5 of Mus musculus (Mouse).